The chain runs to 153 residues: UPF0756 membrane protein Bcer98_3279 (153 aa).

Transmembrane regions (helical) follow at residues 8-28, 54-74, 87-107, and 117-137; these read FLFILLIIGLIAKNQSLIVAI, LGVTVITIAVLVPIATGEIGF, WIALASGIAVALLAKGGLQLL, and LVFGTIIAVALFNGVAVGPLI.

It belongs to the UPF0756 family.

The protein localises to the cell membrane. The chain is UPF0756 membrane protein Bcer98_3279 from Bacillus cytotoxicus (strain DSM 22905 / CIP 110041 / 391-98 / NVH 391-98).